A 178-amino-acid chain; its full sequence is MRKHLGGCWLAIVCILLFSQLCSVKARGIKHRIKWNRKVLPSTSQVTEARTAEIRPGAFIKQGRKLDIDFGVEGNRYYEANYWQFPDGIHYNGCSKANVTKEKFITSCINATQAANQEELSREKQDNKLYQRVLWQLIRELCSTKHCDFWLERGAGLRVTLDQPMMLCLLVFIWFIVK.

Residues 1–25 (MRKHLGGCWLAIVCILLFSQLCSVK) form the signal peptide. Positions 27–50 (RGIKHRIKWNRKVLPSTSQVTEAR) are flexible tail. The segment at 51-154 (TAEIRPGAFI…KHCDFWLERG (104 aa)) is globular. Cystine bridges form between cysteine 94/cysteine 147 and cysteine 108/cysteine 142. Residues asparagine 98 and asparagine 110 are each glycosylated (N-linked (GlcNAc...) asparagine). The cu(2+) binding stretch occupies residues 124–141 (KQDNKLYQRVLWQLIREL). Glycine 154 carries the GPI-anchor amidated glycine lipid modification. A propeptide spans 155 to 178 (AGLRVTLDQPMMLCLLVFIWFIVK) (removed in mature form).

It belongs to the prion family. N-glycosylated. Post-translationally, O-glycosylated. Strongly expressed in testis. Detected at low levels in ovary, spleen, kidney and mammary gland.

It localises to the cell membrane. Functionally, required for normal acrosome reaction and for normal male fertility. Can bind Cu(2+). In Bos taurus (Bovine), this protein is Prion-like protein doppel (PRND).